A 599-amino-acid chain; its full sequence is Protein ref(2)P (599 aa).

Residues 3 to 88 (EKLLKITYQG…CESNMHVQVA (86 aa)) form the PB1 domain. A ZZ-type zinc finger spans residues 122–173 (HDSVQCDGCGLAPLIGFRYKCVQCSNFDLCQKCESAHKHPEHLMLRMPTNNG). Zn(2+) is bound by residues Cys127, Cys130, Cys142, Cys145, Cys151, Cys154, His160, and His163. Disordered stretches follow at residues 192–225 (RRSR…HARR), 245–319 (TTAT…INLD), 357–453 (GIFA…LDPE), and 507–544 (ASAN…DDKR). Low complexity predominate over residues 199–211 (PFQEASQPAPAAE). Basic and acidic residues predominate over residues 276–286 (KATESEAKPTE). Residues 291–319 (NTDQSVPTTEDPVTTPRSTEPTTPVINLD) show a composition bias toward polar residues. Positions 375–411 (QSQSSGQSAASSASQSAVPSAAPSANQSNVPSANQSA) are enriched in low complexity. A run of 3 repeats spans residues 386 to 393 (SASQSAVP), 399 to 406 (ANQSNVPS), and 407 to 413 (ANQSATP). The segment at 386–413 (SASQSAVPSAAPSANQSNVPSANQSATP) is 3 X 8 AA repeats of S-A-N-Q-S-X-X-P. Residues 412 to 423 (TPSISGSISDAQ) are compositionally biased toward polar residues. Residues 511 to 536 (TQTAQVDTVSTSTSTTSVTTNSVGTS) show a composition bias toward low complexity. Residues 550-595 (HTDERINQSIHAMMAMGFSNEGAWLTQLLESVQGNIPAALDVMHVS) form the UBA domain.

As to quaternary structure, interacts with aPKC and Traf6.

The protein resides in the nucleus. The protein localises to the cytoplasm. In terms of biological role, required for selective autophagy activation by ubiquitinated proteins. Implicated in sigma rhabdovirus multiplication and necessary for male fertility. Involved in activating transcription of Drs. This Drosophila simulans (Fruit fly) protein is Protein ref(2)P (ref(2)P).